The chain runs to 492 residues: Trigger factor (492 aa).

The PPIase FKBP-type domain occupies 169 to 254 (GDRVSIDYVG…VKEVSKPGEL (86 aa)). The segment at 441–492 (LMADDEDAETTTKAKPAKKAAAKKAEAKANEDEAEEPKKKAAPKKKAAKDAE) is disordered. The span at 463–479 (KKAEAKANEDEAEEPKK) shows a compositional bias: basic and acidic residues. The segment covering 480-492 (KAAPKKKAAKDAE) has biased composition (basic residues).

The protein belongs to the FKBP-type PPIase family. Tig subfamily.

It localises to the cytoplasm. The catalysed reaction is [protein]-peptidylproline (omega=180) = [protein]-peptidylproline (omega=0). Functionally, involved in protein export. Acts as a chaperone by maintaining the newly synthesized protein in an open conformation. Functions as a peptidyl-prolyl cis-trans isomerase. The polypeptide is Trigger factor (Mesorhizobium japonicum (strain LMG 29417 / CECT 9101 / MAFF 303099) (Mesorhizobium loti (strain MAFF 303099))).